The chain runs to 1755 residues: Transposon Ty1-MR2 Gag-Pol polyprotein (1755 aa).

Composition is skewed to polar residues over residues 1–10 (MESQQLSNYP), 48–60 (TKAN…TPAS), and 127–152 (QSQF…GNTF). Disordered stretches follow at residues 1–93 (MESQ…MMTQ), 126–173 (PQSQ…RPPP), and 352–421 (GSRN…SKST). Residues 153 to 165 (TDSSSADSDMTST) are compositionally biased toward low complexity. Positions 299-401 (NNGIHINNKV…NSKSKTARAH (103 aa)) are RNA-binding. Residues 402-418 (NVSTSNNSPSTDNDSIS) show a composition bias toward low complexity. S416 bears the Phosphoserine mark. The active-site For protease activity; shared with dimeric partner is the D461. Positions 583–640 (NVHTSESTRKYPYPFIHRMLAHANAQTIRYSLKNNTITYFNESDVDWSSAIDYQCPDC) are integrase-type zinc finger-like. The Integrase catalytic domain maps to 660 to 835 (NSYEPFQYLH…AGLDISTLLP (176 aa)). Mg(2+)-binding residues include D671 and D736. 3 disordered regions span residues 956-1087 (SKAV…ETEK), 1092-1111 (RSPS…NIVP), and 1130-1186 (DLPL…EDNE). Residues 960 to 969 (SPTDSTPPST) show a composition bias toward low complexity. Polar residues predominate over residues 1005–1015 (STPQISNIEST). The segment covering 1038-1053 (ESSHASKSKDFRHSDS) has biased composition (basic and acidic residues). 2 stretches are compositionally biased toward polar residues: residues 1054 to 1082 (YSEN…QISD) and 1101 to 1111 (PENNSSHNIVP). The short motif at 1178 to 1212 (KKRSLEDNETEIKVSRDTWNTKNMRSLEPPRSKKR) is the Bipartite nuclear localization signal element. Residues 1338–1476 (NNYYITQLDI…DILGLEIKYQ (139 aa)) form the Reverse transcriptase Ty1/copia-type domain. Residues D1346, D1427, D1428, D1610, E1652, and D1685 each contribute to the Mg(2+) site. Residues 1610-1752 (DASYGNQPYY…IKTFKLLTNK (143 aa)) form the RNase H Ty1/copia-type domain.

The capsid protein forms a homotrimer, from which the VLPs are assembled. The protease is a homodimer, whose active site consists of two apposed aspartic acid residues. Post-translationally, initially, virus-like particles (VLPs) are composed of the structural unprocessed proteins Gag and Gag-Pol, and also contain the host initiator methionine tRNA (tRNA(i)-Met) which serves as a primer for minus-strand DNA synthesis, and a dimer of genomic Ty RNA. Processing of the polyproteins occurs within the particle and proceeds by an ordered pathway, called maturation. First, the protease (PR) is released by autocatalytic cleavage of the Gag-Pol polyprotein yielding capsid protein p45 and a Pol-p154 precursor protein. This cleavage is a prerequisite for subsequent processing of Pol-p154 at the remaining sites to release the mature structural and catalytic proteins. Maturation takes place prior to the RT reaction and is required to produce transposition-competent VLPs.

Its subcellular location is the cytoplasm. It localises to the nucleus. The catalysed reaction is DNA(n) + a 2'-deoxyribonucleoside 5'-triphosphate = DNA(n+1) + diphosphate. The enzyme catalyses Endonucleolytic cleavage to 5'-phosphomonoester.. Its function is as follows. Capsid protein (CA) is the structural component of the virus-like particle (VLP), forming the shell that encapsulates the retrotransposons dimeric RNA genome. The particles are assembled from trimer-clustered units and there are holes in the capsid shells that allow for the diffusion of macromolecules. CA also has nucleocapsid-like chaperone activity, promoting primer tRNA(i)-Met annealing to the multipartite primer-binding site (PBS), dimerization of Ty1 RNA and initiation of reverse transcription. In terms of biological role, the aspartyl protease (PR) mediates the proteolytic cleavages of the Gag and Gag-Pol polyproteins after assembly of the VLP. Functionally, reverse transcriptase/ribonuclease H (RT) is a multifunctional enzyme that catalyzes the conversion of the retro-elements RNA genome into dsDNA within the VLP. The enzyme displays a DNA polymerase activity that can copy either DNA or RNA templates, and a ribonuclease H (RNase H) activity that cleaves the RNA strand of RNA-DNA heteroduplexes during plus-strand synthesis and hydrolyzes RNA primers. The conversion leads to a linear dsDNA copy of the retrotransposon that includes long terminal repeats (LTRs) at both ends. Integrase (IN) targets the VLP to the nucleus, where a subparticle preintegration complex (PIC) containing at least integrase and the newly synthesized dsDNA copy of the retrotransposon must transit the nuclear membrane. Once in the nucleus, integrase performs the integration of the dsDNA into the host genome. This chain is Transposon Ty1-MR2 Gag-Pol polyprotein (TY1B-MR2), found in Saccharomyces cerevisiae (strain ATCC 204508 / S288c) (Baker's yeast).